The sequence spans 718 residues: Polyribonucleotide nucleotidyltransferase (718 aa).

Mg(2+) is bound by residues D497 and D503. In terms of domain architecture, KH spans 564 to 623 (PRLLTMKIDPEQIGLVIGPGGKTIKGITEQTGSKIDIADDGTVTIAALEAEKAEKAKQII). An S1 motif domain is found at 633 to 701 (GEVYMGRVTR…AKGRLNLTRL (69 aa)).

It belongs to the polyribonucleotide nucleotidyltransferase family. It depends on Mg(2+) as a cofactor.

Its subcellular location is the cytoplasm. The enzyme catalyses RNA(n+1) + phosphate = RNA(n) + a ribonucleoside 5'-diphosphate. Its function is as follows. Involved in mRNA degradation. Catalyzes the phosphorolysis of single-stranded polyribonucleotides processively in the 3'- to 5'-direction. The protein is Polyribonucleotide nucleotidyltransferase of Rippkaea orientalis (strain PCC 8801 / RF-1) (Cyanothece sp. (strain PCC 8801)).